We begin with the raw amino-acid sequence, 170 residues long: NADH-quinone oxidoreductase subunit B (170 aa).

Positions 37, 38, 102, and 131 each coordinate [4Fe-4S] cluster.

The protein belongs to the complex I 20 kDa subunit family. In terms of assembly, NDH-1 is composed of 14 different subunits. Subunits NuoB, C, D, E, F, and G constitute the peripheral sector of the complex. [4Fe-4S] cluster is required as a cofactor.

The protein localises to the cell inner membrane. It carries out the reaction a quinone + NADH + 5 H(+)(in) = a quinol + NAD(+) + 4 H(+)(out). In terms of biological role, NDH-1 shuttles electrons from NADH, via FMN and iron-sulfur (Fe-S) centers, to quinones in the respiratory chain. The immediate electron acceptor for the enzyme in this species is believed to be ubiquinone. Couples the redox reaction to proton translocation (for every two electrons transferred, four hydrogen ions are translocated across the cytoplasmic membrane), and thus conserves the redox energy in a proton gradient. This chain is NADH-quinone oxidoreductase subunit B, found in Citrifermentans bemidjiense (strain ATCC BAA-1014 / DSM 16622 / JCM 12645 / Bem) (Geobacter bemidjiensis).